The primary structure comprises 239 residues: MQRGDGRNFNQLRPITITPGFQSFAEGSVLIEQGKTRVICSVSMEDKVPQFLRNSGTGWVTAEYSMLPRSTVTRTQRDSSAGKISGRSQEIQRLIGRSLRSCVDLAALGERSFIIDCDVIQADAGTRTASITGAYIALYLAFKKMVDMGILSKMPFTSQVAAVSVSIFKGNIVLDPCYDEDFQAEVDFNLVMNDRAEFVEIQGTAEGKTFSRDTLDQVLKLGEAGIWQLFDIQNSITRP.

Phosphate-binding positions include R87 and 125 to 127 (GTR).

This sequence belongs to the RNase PH family. As to quaternary structure, homohexameric ring arranged as a trimer of dimers.

It catalyses the reaction tRNA(n+1) + phosphate = tRNA(n) + a ribonucleoside 5'-diphosphate. Phosphorolytic 3'-5' exoribonuclease that plays an important role in tRNA 3'-end maturation. Removes nucleotide residues following the 3'-CCA terminus of tRNAs; can also add nucleotides to the ends of RNA molecules by using nucleoside diphosphates as substrates, but this may not be physiologically important. Probably plays a role in initiation of 16S rRNA degradation (leading to ribosome degradation) during starvation. This Dehalococcoides mccartyi (strain ATCC BAA-2266 / KCTC 15142 / 195) (Dehalococcoides ethenogenes (strain 195)) protein is Ribonuclease PH.